Reading from the N-terminus, the 711-residue chain is Ribosomal RNA large subunit methyltransferase K/L (711 aa).

The THUMP domain occupies T43–L154.

It belongs to the methyltransferase superfamily. RlmKL family.

The protein localises to the cytoplasm. The catalysed reaction is guanosine(2445) in 23S rRNA + S-adenosyl-L-methionine = N(2)-methylguanosine(2445) in 23S rRNA + S-adenosyl-L-homocysteine + H(+). It carries out the reaction guanosine(2069) in 23S rRNA + S-adenosyl-L-methionine = N(2)-methylguanosine(2069) in 23S rRNA + S-adenosyl-L-homocysteine + H(+). Specifically methylates the guanine in position 2445 (m2G2445) and the guanine in position 2069 (m7G2069) of 23S rRNA. The protein is Ribosomal RNA large subunit methyltransferase K/L of Haemophilus influenzae (strain PittGG).